The primary structure comprises 267 residues: Methylglyoxal reductase DkgB (267 aa).

Catalysis depends on Tyr-39, which acts as the Proton donor. His-97 is a substrate binding site. 179-231 (MTLAYGKALKDEVIARIAAKHNATPAQVILAWAMGEGYSVIPSSTKRENLESN) is a binding site for NADP(+).

It belongs to the aldo/keto reductase family. In terms of assembly, monomer.

It localises to the cytoplasm. The catalysed reaction is hydroxyacetone + NADP(+) = methylglyoxal + NADPH + H(+). Aldo-keto reductase that significantly contributes to cellular methylglyoxal detoxification by catalyzing the NADPH-dependent conversion of methylglyoxal to acetol. This is Methylglyoxal reductase DkgB from Escherichia coli O157:H7.